A 164-amino-acid polypeptide reads, in one-letter code: Urease subunit beta (164 aa).

Polar residues-rich tracts occupy residues 1–10 (MSTKTNSTKA) and 20–30 (TNRGTKSSAGY). Positions 1-30 (MSTKTNSTKATSEKTDSLKTNRGTKSSAGY) are disordered.

Belongs to the urease beta subunit family. As to quaternary structure, heterotrimer of UreA (gamma), UreB (beta) and UreC (alpha) subunits. Three heterotrimers associate to form the active enzyme.

Its subcellular location is the cytoplasm. It catalyses the reaction urea + 2 H2O + H(+) = hydrogencarbonate + 2 NH4(+). It functions in the pathway nitrogen metabolism; urea degradation; CO(2) and NH(3) from urea (urease route): step 1/1. Functionally, expression of the urease operon increases the likelihood of bacterial survival by contributing to acid resistance in vitro and in vivo in BALB/c mice. Y.enterocolitica enters the body via an oral path and must survive the acidic stomach before being able to colonize the intestinal mucosa. The protein is Urease subunit beta of Yersinia enterocolitica.